The chain runs to 208 residues: Large ribosomal subunit protein uL4 (208 aa).

The disordered stretch occupies residues Arg-45–Val-89.

The protein belongs to the universal ribosomal protein uL4 family. As to quaternary structure, part of the 50S ribosomal subunit.

Its function is as follows. One of the primary rRNA binding proteins, this protein initially binds near the 5'-end of the 23S rRNA. It is important during the early stages of 50S assembly. It makes multiple contacts with different domains of the 23S rRNA in the assembled 50S subunit and ribosome. Forms part of the polypeptide exit tunnel. In Lactococcus lactis subsp. cremoris (strain SK11), this protein is Large ribosomal subunit protein uL4.